Here is a 602-residue protein sequence, read N- to C-terminus: DNA ligase (602 aa).

Residue Glu-262 coordinates ATP. Catalysis depends on Lys-264, which acts as the N6-AMP-lysine intermediate. Residues Arg-269, Arg-284, Glu-314, Phe-354, Arg-431, and Lys-437 each coordinate ATP.

The protein belongs to the ATP-dependent DNA ligase family. Monomer. It depends on Mg(2+) as a cofactor. The cofactor is Mn(2+).

It carries out the reaction ATP + (deoxyribonucleotide)n-3'-hydroxyl + 5'-phospho-(deoxyribonucleotide)m = (deoxyribonucleotide)n+m + AMP + diphosphate.. The catalysed reaction is ADP + (deoxyribonucleotide)n-3'-hydroxyl + 5'-phospho-(deoxyribonucleotide)m = (deoxyribonucleotide)n+m + AMP + phosphate.. It catalyses the reaction GTP + (deoxyribonucleotide)n-3'-hydroxyl + 5'-phospho-(deoxyribonucleotide)m = (deoxyribonucleotide)n+m + GMP + diphosphate.. With respect to regulation, inhibited in the presence of 100 mM KCl, NaCl or NH(4)Cl. Functionally, DNA ligase that seals nicks in double-stranded DNA during DNA replication, DNA recombination and DNA repair. Can also use ADP, but not NAD(+). This is DNA ligase from Aeropyrum pernix (strain ATCC 700893 / DSM 11879 / JCM 9820 / NBRC 100138 / K1).